A 768-amino-acid chain; its full sequence is DNA ligase 1 (768 aa).

The disordered stretch occupies residues 42–139 (VEVSQSSSDS…KEPPLESNAR (98 aa)). Residues 52-99 (KNVDGRSTSEKRKVESVKLVDESKHNNHDDTGTQNVERENNIVSEAKK) show a composition bias toward basic and acidic residues. Positions 104 to 124 (GSSSSSSDAVSSNNDSGASTP) are enriched in low complexity. Residues 309–318 (KLRLQLAEKT) are interaction with target DNA. E414 serves as a coordination point for ATP. K416 serves as the catalytic N6-AMP-lysine intermediate. 2 residues coordinate ATP: R421 and R437. E469 provides a ligand contact to Mg(2+). An interaction with target DNA region spans residues 490 to 492 (KRK). A Mg(2+)-binding site is contributed by E568. Positions 573, 587, and 593 each coordinate ATP.

This sequence belongs to the ATP-dependent DNA ligase family. Mg(2+) is required as a cofactor.

It localises to the nucleus. The enzyme catalyses ATP + (deoxyribonucleotide)n-3'-hydroxyl + 5'-phospho-(deoxyribonucleotide)m = (deoxyribonucleotide)n+m + AMP + diphosphate.. DNA ligase that seals nicks in double-stranded DNA during DNA replication, DNA recombination and DNA repair. The protein is DNA ligase 1 (cdc17) of Schizosaccharomyces pombe (strain 972 / ATCC 24843) (Fission yeast).